The sequence spans 333 residues: Ferrochelatase (333 aa).

His-202 and Glu-284 together coordinate Fe cation.

This sequence belongs to the ferrochelatase family.

It localises to the cytoplasm. It carries out the reaction heme b + 2 H(+) = protoporphyrin IX + Fe(2+). It functions in the pathway porphyrin-containing compound metabolism; protoheme biosynthesis; protoheme from protoporphyrin-IX: step 1/1. Its function is as follows. Catalyzes the ferrous insertion into protoporphyrin IX. This chain is Ferrochelatase, found in Francisella tularensis subsp. holarctica (strain LVS).